Reading from the N-terminus, the 59-residue chain is Cecropin-A (59 aa).

The N-terminal stretch at 1 to 23 (MNFTKLFLLIAMAVLLLTGQSEA) is a signal peptide. A propeptide spans 58–59 (GK) (removed in mature form (AeaeCec2)).

As to expression, hemolymph (at protein level).

The protein localises to the secreted. Its function is as follows. Antimicrobial peptide. Antibacterial activity against Gram-negative bacteria E.coli D22 and D31, E.carotovora, K.pneumoniae, P.aeruginosa, S.typhimurium, E.cloacae B12 and X.campestris and Gram-positive bacteria A.viridans, M.luteus, B.megaterium and S.pyogenes. Possesses antifungal activity against F.oxysporum, F.culmorum and N.crassa, C.albicans, C.neoformans and S.cerevisiae. No activity against Gram-negative S.marcescens Db11, Gram-positive B.cereus, B.subtilis, B.thuringiensis, S.aureus and L.monocytogenes, the fungi A.fumigatus and B.bassiana and C.glabrata. Partially neutralizes lipopolysaccharides (LPS). Exhibits anti-inflammatory properties: inhibits LPS-induced iNOS/NOS2 transcription, nitric oxide (NO) and pro-inflammatory cytokine production in mouse macrophages and human peripheral blood mononuclear cells (PBMCs); inhibits LPS-induced activation of MAPK and NF-kappa-B signaling pathways in mouse macrophages. This chain is Cecropin-A (CECA), found in Aedes aegypti (Yellowfever mosquito).